The following is a 310-amino-acid chain: Acetylglutamate kinase (310 aa).

Substrate-binding positions include 76–77, Arg98, and Asn203; that span reads GG.

The protein belongs to the acetylglutamate kinase family. ArgB subfamily.

The protein localises to the cytoplasm. It carries out the reaction N-acetyl-L-glutamate + ATP = N-acetyl-L-glutamyl 5-phosphate + ADP. Its pathway is amino-acid biosynthesis; L-arginine biosynthesis; N(2)-acetyl-L-ornithine from L-glutamate: step 2/4. Functionally, catalyzes the ATP-dependent phosphorylation of N-acetyl-L-glutamate. In Cutibacterium acnes (strain DSM 16379 / KPA171202) (Propionibacterium acnes), this protein is Acetylglutamate kinase.